The primary structure comprises 66 residues: Large ribosomal subunit protein bL33c (66 aa).

This sequence belongs to the bacterial ribosomal protein bL33 family.

It is found in the plastid. The protein localises to the chloroplast. The polypeptide is Large ribosomal subunit protein bL33c (Nandina domestica (Heavenly bamboo)).